Consider the following 334-residue polypeptide: Ornithine carbamoyltransferase (334 aa).

Residues 56-59, glutamine 83, arginine 107, and 134-137 each bind carbamoyl phosphate; these read STRT and HPTQ. Residues asparagine 168, aspartate 232, and 236–237 each bind L-ornithine; that span reads SM. Carbamoyl phosphate-binding positions include 274–275 and arginine 320; that span reads CL.

This sequence belongs to the aspartate/ornithine carbamoyltransferase superfamily. OTCase family.

The protein resides in the cytoplasm. It carries out the reaction carbamoyl phosphate + L-ornithine = L-citrulline + phosphate + H(+). Its pathway is amino-acid biosynthesis; L-arginine biosynthesis; L-arginine from L-ornithine and carbamoyl phosphate: step 1/3. Its function is as follows. Reversibly catalyzes the transfer of the carbamoyl group from carbamoyl phosphate (CP) to the N(epsilon) atom of ornithine (ORN) to produce L-citrulline. This Escherichia coli (strain 55989 / EAEC) protein is Ornithine carbamoyltransferase.